Consider the following 385-residue polypeptide: 1-deoxy-D-xylulose 5-phosphate reductoisomerase (385 aa).

The NADPH site is built by Thr-11, Gly-12, Ser-13, Ile-14, Ala-37, Arg-38, Asn-39, and Asn-123. Lys-124 provides a ligand contact to 1-deoxy-D-xylulose 5-phosphate. Residue Glu-125 coordinates NADPH. Residue Asp-149 participates in Mn(2+) binding. Residues Ser-150, Glu-151, Ser-173, and His-196 each contribute to the 1-deoxy-D-xylulose 5-phosphate site. A Mn(2+)-binding site is contributed by Glu-151. Gly-202 contacts NADPH. 1-deoxy-D-xylulose 5-phosphate-binding residues include Ser-209, Asn-214, Lys-215, and Glu-218. Residue Glu-218 participates in Mn(2+) binding.

Belongs to the DXR family. Requires Mg(2+) as cofactor. It depends on Mn(2+) as a cofactor.

It catalyses the reaction 2-C-methyl-D-erythritol 4-phosphate + NADP(+) = 1-deoxy-D-xylulose 5-phosphate + NADPH + H(+). It participates in isoprenoid biosynthesis; isopentenyl diphosphate biosynthesis via DXP pathway; isopentenyl diphosphate from 1-deoxy-D-xylulose 5-phosphate: step 1/6. In terms of biological role, catalyzes the NADPH-dependent rearrangement and reduction of 1-deoxy-D-xylulose-5-phosphate (DXP) to 2-C-methyl-D-erythritol 4-phosphate (MEP). The chain is 1-deoxy-D-xylulose 5-phosphate reductoisomerase from Moorella thermoacetica (strain ATCC 39073 / JCM 9320).